A 233-amino-acid polypeptide reads, in one-letter code: Maternal B9.15 protein (233 aa).

The interval 135 to 165 is disordered; that stretch reads KATSDYHSGTSSDEEPTNKEPKTIPKVSNPN.

Belongs to the BTG family.

In Xenopus laevis (African clawed frog), this protein is Maternal B9.15 protein.